A 228-amino-acid polypeptide reads, in one-letter code: CD9 antigen (228 aa).

Over 1-12 the chain is Cytoplasmic; sequence MPVKGGTKCIKY. The S-palmitoyl cysteine moiety is linked to residue cysteine 9. Residues 13 to 33 form a helical membrane-spanning segment; that stretch reads LLFGFNFIFWLAGIAVLAIGL. The Extracellular segment spans residues 34–55; that stretch reads WLRFDSQTKSIFEQETNNNNSS. Asparagine 52 and asparagine 53 each carry an N-linked (GlcNAc...) asparagine glycan. A helical membrane pass occupies residues 56-76; sequence FYTGVYILIGAGALMMLVGFL. Topologically, residues 77-87 are cytoplasmic; it reads GCCGAVQESQC. Residues cysteine 78, cysteine 79, and cysteine 87 are each lipidated (S-palmitoyl cysteine). Residues 88–111 traverse the membrane as a helical segment; that stretch reads MLGLFFGFLLVIFAIEIAAAIWGY. Residues 112–195 are Extracellular-facing; that stretch reads SHKDEVIKEV…KEVFDNKFHI (84 aa). Cystine bridges form between cysteine 152/cysteine 181 and cysteine 153/cysteine 167. Residues 196-221 traverse the membrane as a helical segment; it reads IGAVGIGIAVVMIFGMIFSMILCCAI. Residues cysteine 218 and cysteine 219 are each lipidated (S-palmitoyl cysteine). The Cytoplasmic segment spans residues 222–228; that stretch reads RRNREMV.

Belongs to the tetraspanin (TM4SF) family. Forms both disulfide-linked homodimers and higher homooligomers as well as heterooligomers with other members of the tetraspanin family. Interacts (via the second extracellular domain) with integrin ITGAV:ITGB3. Interacts with integrin ITGA6:ITGB1; interaction takes place in oocytes and is involved in sperm-egg fusion. Part of integrin-tetraspanin complexes composed of CD81, beta-1 and beta-2 integrins in the membrane of monocyte/macrophages. Interacts with CD63; identified in a complex with CD63 and ITGB3. Associates with CR2/CD21 and with PTGFRN/CD9P1. Part of a complex composed of CD9, CD81, PTGFRN and IGSF8. Interacts directly with IGSF8. Interacts with PDPN; this interaction is homophilic and attenuates platelet aggregation and pulmonary metastasis induced by PDPN. Interacts (on T cell side) with CD81 at immunological synapses between antigen-presenting cells and T cells. Palmitoylated at a low, basal level in unstimulated platelets. The level of palmitoylation increases when platelets are activated by thrombin (in vitro). The protein exists in three forms with molecular masses between 22 and 27 kDa, and is known to carry covalently linked fatty acids. Palmitoylation by ZDHHC2 regulates CD9 expression, association with other tetraspanin family proteins and function in cell adhesion.

The protein localises to the cell membrane. Its subcellular location is the membrane. The protein resides in the secreted. It localises to the extracellular exosome. Integral membrane protein associated with integrins, which regulates different processes, such as sperm-egg fusion, platelet activation and aggregation, and cell adhesion. Present at the cell surface of oocytes and plays a key role in sperm-egg fusion, possibly by organizing multiprotein complexes and the morphology of the membrane required for the fusion. In myoblasts, associates with CD81 and PTGFRN and inhibits myotube fusion during muscle regeneration. In macrophages, associates with CD81 and beta-1 and beta-2 integrins, and prevents macrophage fusion into multinucleated giant cells specialized in ingesting complement-opsonized large particles. Also prevents the fusion between mononuclear cell progenitors into osteoclasts in charge of bone resorption. Acts as a receptor for PSG17. Involved in platelet activation and aggregation. Regulates paranodal junction formation. Involved in cell adhesion, cell motility and tumor metastasis. This is CD9 antigen from Chlorocebus aethiops (Green monkey).